The primary structure comprises 200 residues: Adenylate kinase (200 aa).

Residue 10 to 15 (GAGKGT) coordinates ATP. Residues 30–59 (STGDMLRAAVAAETPVGLEAKAIMESGGLV) are NMP. AMP contacts are provided by residues Thr31, Arg36, 57 to 59 (GLV), 85 to 88 (GFPR), and Gln92. The tract at residues 126 to 142 (KRAEETAARGQPVRKDD) is LID. Position 127 (Arg127) interacts with ATP. Positions 139 and 150 each coordinate AMP. An ATP-binding site is contributed by Lys178.

It belongs to the adenylate kinase family. Monomer.

It is found in the cytoplasm. It carries out the reaction AMP + ATP = 2 ADP. Its pathway is purine metabolism; AMP biosynthesis via salvage pathway; AMP from ADP: step 1/1. Catalyzes the reversible transfer of the terminal phosphate group between ATP and AMP. Plays an important role in cellular energy homeostasis and in adenine nucleotide metabolism. The polypeptide is Adenylate kinase (Methylorubrum extorquens (strain PA1) (Methylobacterium extorquens)).